The following is a 732-amino-acid chain: MKQVAGFIGMSQKNKGIQQNQWHSGPPQGLLSGQTKAEQGTSSQQAGVNQGENSKSGAVVQRKMPMRRDVNSAAQRQHVRRLVYTPYFPNETWNISTFKNGAKDVERSVISTLNNVAENRVMDNCTSRVIFEMTQIQFESLPDIIRNEFTRVGDDALKWAVPEDLKSADLDHMMVVKLSTEGTIYPTTLIFPGGCSGMAKLKSVYSFLESQLERIVTPTPSVSLKYVTSWAEHLFDLCSGQLINSQNERVDKLLGYMIWDIEKAITLTDQVIACYNHPEVVLRRLGASDIACAVLAGESVVKLTRLALSKSPVDGCSCCRILELILNLPSRKPNDKVPQVPLDILFASVYRYVSAMCMGRVLNGRIDASGIQSTDHATASIKLNDIIVNDLELRSMGVDKTSSFRGTQSMRAFYVPENLAGSILDRINVLVMRHFGILHMWGFNGVVLQNQEGYCDYHIITGLNHLTTITHTNSMVAVHWGTESRMDNIFEIKARTLPTASETMITLIENALKEQLTSIVKDGLRKGVSFSVKRNINDSRFGFETNSSPAIFLKLRDMLKRAKPFSDLLSLALSKVIKKENAMIQRSITTVEVAVAIKMKVYGLDEYVSLMKVEKKEVESGSLPLQEFLKLKSNAAGAQSSTVAVKMKEEEVNSKAYCLISETIVVNMDAVRSACGVVQSENLVIKSELSGPELSESVTSGLMELLGRNAGPSKSWADQVEEAENEEEKQKE.

Polar residues-rich tracts occupy residues 13–23 and 31–56; these read KNKGIQQNQWH and LSGQ…NSKS. Disordered regions lie at residues 13-74 and 706-732; these read KNKG…NSAA and LGRN…KQKE. The segment covering 719 to 732 has biased composition (acidic residues); sequence QVEEAENEEEKQKE.

This is Non-structural protein 4 from Catharanthus roseus (Madagascar periwinkle).